A 141-amino-acid chain; its full sequence is Endoribonuclease YbeY (141 aa).

3 residues coordinate Zn(2+): H105, H109, and D115.

This sequence belongs to the endoribonuclease YbeY family. It depends on Zn(2+) as a cofactor.

Its subcellular location is the cytoplasm. Functionally, single strand-specific metallo-endoribonuclease involved in late-stage 70S ribosome quality control and in maturation of the 3' terminus of the 16S rRNA. The chain is Endoribonuclease YbeY from Chloroherpeton thalassium (strain ATCC 35110 / GB-78).